Consider the following 254-residue polypeptide: Adenosylcobinamide-GDP ribazoletransferase (254 aa).

A run of 7 helical transmembrane segments spans residues 27–47 (SSLY…VLFA), 50–70 (GMGA…GFIL), 104–124 (VGSF…ICLL), 131–151 (AYGM…LLAA), 170–190 (AGWP…FVLL), 194–214 (VVPS…VGWL), and 233–253 (LVEI…FSAI).

This sequence belongs to the CobS family. Requires Mg(2+) as cofactor.

Its subcellular location is the cell inner membrane. It carries out the reaction alpha-ribazole + adenosylcob(III)inamide-GDP = adenosylcob(III)alamin + GMP + H(+). The catalysed reaction is alpha-ribazole 5'-phosphate + adenosylcob(III)inamide-GDP = adenosylcob(III)alamin 5'-phosphate + GMP + H(+). Its pathway is cofactor biosynthesis; adenosylcobalamin biosynthesis; adenosylcobalamin from cob(II)yrinate a,c-diamide: step 7/7. Functionally, joins adenosylcobinamide-GDP and alpha-ribazole to generate adenosylcobalamin (Ado-cobalamin). Also synthesizes adenosylcobalamin 5'-phosphate from adenosylcobinamide-GDP and alpha-ribazole 5'-phosphate. The chain is Adenosylcobinamide-GDP ribazoletransferase from Chlorobaculum parvum (strain DSM 263 / NCIMB 8327) (Chlorobium vibrioforme subsp. thiosulfatophilum).